Here is a 261-residue protein sequence, read N- to C-terminus: Proteasome subunit alpha type-4 (261 aa).

Ser-13 and Ser-75 each carry phosphoserine. At Lys-127 the chain carries N6-acetyllysine. Phosphoserine is present on Ser-173. Lys-176 is modified (N6-acetyllysine). Residues His-240 to Lys-261 are disordered.

The protein belongs to the peptidase T1A family. As to quaternary structure, the 26S proteasome consists of a 20S proteasome core and two 19S regulatory subunits. The 20S proteasome core is a barrel-shaped complex made of 28 subunits that are arranged in four stacked rings. The two outer rings are each formed by seven alpha subunits, and the two inner rings are formed by seven beta subunits. The proteolytic activity is exerted by three beta-subunits PSMB5, PSMB6 and PSMB7.

The protein localises to the cytoplasm. The protein resides in the nucleus. Component of the 20S core proteasome complex involved in the proteolytic degradation of most intracellular proteins. This complex plays numerous essential roles within the cell by associating with different regulatory particles. Associated with two 19S regulatory particles, forms the 26S proteasome and thus participates in the ATP-dependent degradation of ubiquitinated proteins. The 26S proteasome plays a key role in the maintenance of protein homeostasis by removing misfolded or damaged proteins that could impair cellular functions, and by removing proteins whose functions are no longer required. Associated with the PA200 or PA28, the 20S proteasome mediates ubiquitin-independent protein degradation. This type of proteolysis is required in several pathways including spermatogenesis (20S-PA200 complex) or generation of a subset of MHC class I-presented antigenic peptides (20S-PA28 complex). This Macaca fascicularis (Crab-eating macaque) protein is Proteasome subunit alpha type-4 (PSMA4).